The sequence spans 372 residues: 4-hydroxy-3-methylbut-2-en-1-yl diphosphate synthase (flavodoxin) (372 aa).

4 residues coordinate [4Fe-4S] cluster: Cys270, Cys273, Cys305, and Glu312.

It belongs to the IspG family. Requires [4Fe-4S] cluster as cofactor.

It carries out the reaction (2E)-4-hydroxy-3-methylbut-2-enyl diphosphate + oxidized [flavodoxin] + H2O + 2 H(+) = 2-C-methyl-D-erythritol 2,4-cyclic diphosphate + reduced [flavodoxin]. It functions in the pathway isoprenoid biosynthesis; isopentenyl diphosphate biosynthesis via DXP pathway; isopentenyl diphosphate from 1-deoxy-D-xylulose 5-phosphate: step 5/6. Converts 2C-methyl-D-erythritol 2,4-cyclodiphosphate (ME-2,4cPP) into 1-hydroxy-2-methyl-2-(E)-butenyl 4-diphosphate. In Salmonella typhi, this protein is 4-hydroxy-3-methylbut-2-en-1-yl diphosphate synthase (flavodoxin).